The primary structure comprises 269 residues: Putative phosphoenolpyruvate synthase regulatory protein (269 aa).

ADP is bound at residue 149-156 (GVSRSGKT).

Belongs to the pyruvate, phosphate/water dikinase regulatory protein family. PSRP subfamily.

It carries out the reaction [pyruvate, water dikinase] + ADP = [pyruvate, water dikinase]-phosphate + AMP + H(+). The enzyme catalyses [pyruvate, water dikinase]-phosphate + phosphate + H(+) = [pyruvate, water dikinase] + diphosphate. Its function is as follows. Bifunctional serine/threonine kinase and phosphorylase involved in the regulation of the phosphoenolpyruvate synthase (PEPS) by catalyzing its phosphorylation/dephosphorylation. This Pseudoalteromonas translucida (strain TAC 125) protein is Putative phosphoenolpyruvate synthase regulatory protein.